The sequence spans 393 residues: S-adenosylmethionine synthase (393 aa).

His-16 is a binding site for ATP. Asp-18 is a Mg(2+) binding site. Glu-44 serves as a coordination point for K(+). 2 residues coordinate L-methionine: Glu-57 and Gln-100. Residues Gln-100 to His-110 are flexible loop. Residues Asp-167–Lys-169, Arg-238–Phe-239, Asp-247, Arg-253–Lys-254, Ala-270, and Lys-274 contribute to the ATP site. Residue Asp-247 participates in L-methionine binding. Lys-278 lines the L-methionine pocket.

Belongs to the AdoMet synthase family. As to quaternary structure, homotetramer; dimer of dimers. Mg(2+) is required as a cofactor. K(+) serves as cofactor.

It is found in the cytoplasm. It catalyses the reaction L-methionine + ATP + H2O = S-adenosyl-L-methionine + phosphate + diphosphate. It functions in the pathway amino-acid biosynthesis; S-adenosyl-L-methionine biosynthesis; S-adenosyl-L-methionine from L-methionine: step 1/1. Catalyzes the formation of S-adenosylmethionine (AdoMet) from methionine and ATP. The overall synthetic reaction is composed of two sequential steps, AdoMet formation and the subsequent tripolyphosphate hydrolysis which occurs prior to release of AdoMet from the enzyme. The chain is S-adenosylmethionine synthase from Acidovorax sp. (strain JS42).